Reading from the N-terminus, the 107-residue chain is EIVLTQSPAITAASLGQKVTITCSASSSVSYMHWYQQKSGTSPKPWIYEISKLASGVPARFSGSGSGTSYSLTISSMEAEDAAIYYCQQWNYPLWTFGGGTKLEIKR.

The tract at residues 1 to 23 is framework-1; it reads EIVLTQSPAITAASLGQKVTITC. An intrachain disulfide couples Cys-23 to Cys-87. A complementarity-determining-1 region spans residues 24–33; sequence SASSSVSYMH. The interval 34 to 48 is framework-2; sequence WYQQKSGTSPKPWIY. Residues 49 to 55 are complementarity-determining-2; it reads EISKLAS. The framework-3 stretch occupies residues 56–87; the sequence is GVPARFSGSGSGTSYSLTISSMEAEDAAIYYC. The segment at 88–96 is complementarity-determining-3; sequence QQWNYPLWT. The interval 97–106 is framework-4; it reads FGGGTKLEIK.

The sequence is that of Ig kappa chain V-VI region XRPC 44 from Mus musculus (Mouse).